A 204-amino-acid polypeptide reads, in one-letter code: Large ribosomal subunit protein uL4 (204 aa).

The disordered stretch occupies residues 49–75 (TKGRSEVSGGGKKPWRQKGRGGARAGS).

This sequence belongs to the universal ribosomal protein uL4 family. As to quaternary structure, part of the 50S ribosomal subunit.

Functionally, one of the primary rRNA binding proteins, this protein initially binds near the 5'-end of the 23S rRNA. It is important during the early stages of 50S assembly. It makes multiple contacts with different domains of the 23S rRNA in the assembled 50S subunit and ribosome. Its function is as follows. Forms part of the polypeptide exit tunnel. This Campylobacter hominis (strain ATCC BAA-381 / DSM 21671 / CCUG 45161 / LMG 19568 / NCTC 13146 / CH001A) protein is Large ribosomal subunit protein uL4.